The sequence spans 334 residues: Spermatogenesis-associated protein 32 (334 aa).

The segment at Ser-24 to Arg-98 is disordered. A compositionally biased stretch (acidic residues) spans Glu-37 to Ala-47. The segment covering Glu-48 to Pro-60 has biased composition (basic and acidic residues). The segment covering Ser-77 to Arg-98 has biased composition (polar residues). Phosphoserine is present on residues Ser-135 and Ser-138.

As to quaternary structure, interacts with syntaxin-1 and ACTB. In terms of tissue distribution, highly expressed in the testis and weakly in the brain and heart.

The polypeptide is Spermatogenesis-associated protein 32 (Spata32) (Mus musculus (Mouse)).